The sequence spans 1283 residues: MPNLQQTASQSQHHLYPPHLRPHHHHQQQQHHQQQQQQQHTHHQQQQQHHSDFPLPDGWDIAKDFDGKTYYIDHINKKTTWLDPRDCYTKPQTFEDCVGDELPMGWEESYDPNIGPYYINHLAQSTQLEDPRQEWKTVQEQMLSDYLSAAQDQLENKREMLDVKQQRLLWAQEEYNHLKLAASRSSLCSSSSSMSRHDPELLRADLMLARERVHQLKQELTHITNDISYTERGMNTLYSVGEKINARENGCYDIAEVQAIREEMLKVHKSLVSGEKVREELMRSLVQIKNELGRQQISEENSDLASPFDRVCVASQTDLCGSSGDNLNGGARFAEMAKTKLQYAEWRKHIKKLQQQLADHVERIEPGQLESDKDRILLIQEKEKLLNDLNSISLKSRSEEEKRVIHQTRHKLEEDLKEAYEANNTCVANRLRFHEEKQLLLDKLQEALKSTKLLEERLKSFSSESTFSISSGSSLGSLSTASSKSALSFTDIYIDPFAVDSPIDVVDLRRRSQRLFQQHQQQRLLPVHPVLQQQQSAEVTLSPRSSLSMETPPASPMKYNAGADQTPQALKEEPTYANALPAPPAYTAPPPVPISGVRARPYDLDSTVLDCMMLEAKLQKLNMGTPLNLAAAPLSPISEKPSLLDLPQEMLSRSSSTSNTRSVSAAVSNESVAGDSGVFEASRAHLPRKELAQVQIGLKYLKQEGVLVVSLERANNLLALWTASADNSQVYLRAALLPNSLTSIRTKALGDFQKPFFNDTFAVPITLDKLLTKSLQVTVVTMTGQKEEIIGTVQISMAEFNPEDSTLKWYNVLSSKFIPSFESLDIPSTSAAAAAAAVAASNAPSSGNNREESSDESTITSSQTSTLTRNQAPCMELQEQITAELLELGPLNEPECSDDDDEDEEEELDDKQLVSDVGLMNSSGMLDAYLQNMKQEFADKETNTDRAYLPEKSRGQSQLMDDRPVKRSQTFTPSAAVSKNRYNCRLNRSDSDSAMHCGVAPHTFQRGAAERRSLRFHTKAPKSVTKLHHTHIPRTSLDLELDLQAQHSKLYFLNDQIAKLQNLKEVLQKACENKDPLVAAWAIENEEFQRLVARADPAKCPEERQLQKLLMKTAKEIHKLRKTKVPKGCPDLVSFKEKITFFTRKGLSVPELPSEFTLPEANPIEEEEEEEDEDEFYNSPETAIAINTALVASSNRNKNLSEHPHRSTSGAVPKLPAPVATPAATPAATPAATPVATPAATPVVATAAQPEAKPAAAPIPVASNDAEQQRFDYVVDRNYGVEV.

The segment covering 1–13 has biased composition (polar residues); it reads MPNLQQTASQSQH. The disordered stretch occupies residues 1 to 59; that stretch reads MPNLQQTASQSQHHLYPPHLRPHHHHQQQQHHQQQQQQQHTHHQQQQQHHSDFPLPDGW. A compositionally biased stretch (basic residues) spans 20–29; sequence LRPHHHHQQQ. Positions 30–48 are enriched in low complexity; the sequence is QHHQQQQQQQHTHHQQQQQ. WW domains follow at residues 53–86 and 100–133; these read FPLP…DPRD and DELP…DPRQ. Coiled coils occupy residues 200 to 228 and 334 to 462; these read ELLR…NDIS and AEMA…KSFS. Residues 537–549 show a composition bias toward polar residues; that stretch reads AEVTLSPRSSLSM. The disordered stretch occupies residues 537 to 559; sequence AEVTLSPRSSLSMETPPASPMKY. A C2 domain is found at 690 to 810; the sequence is ELAQVQIGLK…NPEDSTLKWY (121 aa). Disordered stretches follow at residues 840-871, 887-910, and 941-969; these read ASNA…TRNQ, ELGP…ELDD, and ETNT…KRSQ. Low complexity predominate over residues 856–868; the sequence is ESTITSSQTSTLT. The segment covering 895 to 909 has biased composition (acidic residues); that stretch reads ECSDDDDEDEEEELD. Over residues 941–965 the composition is skewed to basic and acidic residues; sequence ETNTDRAYLPEKSRGQSQLMDDRPV. Residues 1048–1075 are a coiled coil; that stretch reads SKLYFLNDQIAKLQNLKEVLQKACENKD. A disordered region spans residues 1197-1263; that stretch reads NKNLSEHPHR…PAAAPIPVAS (67 aa). Over residues 1217–1262 the composition is skewed to low complexity; sequence APVATPAATPAATPAATPVATPAATPVVATAAQPEAKPAAAPIPVA.

The protein belongs to the WWC family. KIBRA subfamily. In terms of assembly, forms a complex with Mer and Ex. Interacts (via domain WW 1) with Ex (via RXPPXY motif). Interacts with Mer, Sav, Hpo and Wts.

The protein localises to the cytoplasm. It is found in the apical cell membrane. Regulator of the Hippo/SWH (Sav/Wts/Hpo) signaling pathway, a signaling pathway that plays a pivotal role in organ size control and tumor suppression by restricting proliferation and promoting apoptosis. The core of this pathway is composed of a kinase cascade wherein Hippo (Hpo), in complex with its regulatory protein Salvador (Sav), phosphorylates and activates Warts (Wts) in complex with its regulatory protein Mats, which in turn phosphorylates and inactivates the Yorkie (Yki) oncoprotein. Kibra acts synergistically along with Ex and Mer to regulate the Hippo signaling pathway. The protein is Protein kibra (Kibra) of Drosophila erecta (Fruit fly).